The following is a 193-amino-acid chain: ATP-dependent Clp protease proteolytic subunit (193 aa).

The active-site Nucleophile is Ser-98. His-123 is an active-site residue.

This sequence belongs to the peptidase S14 family. Fourteen ClpP subunits assemble into 2 heptameric rings which stack back to back to give a disk-like structure with a central cavity, resembling the structure of eukaryotic proteasomes.

The protein resides in the cytoplasm. The catalysed reaction is Hydrolysis of proteins to small peptides in the presence of ATP and magnesium. alpha-casein is the usual test substrate. In the absence of ATP, only oligopeptides shorter than five residues are hydrolyzed (such as succinyl-Leu-Tyr-|-NHMec, and Leu-Tyr-Leu-|-Tyr-Trp, in which cleavage of the -Tyr-|-Leu- and -Tyr-|-Trp bonds also occurs).. In terms of biological role, cleaves peptides in various proteins in a process that requires ATP hydrolysis. Has a chymotrypsin-like activity. Plays a major role in the degradation of misfolded proteins. This Lachnospira eligens (strain ATCC 27750 / DSM 3376 / VPI C15-48 / C15-B4) (Eubacterium eligens) protein is ATP-dependent Clp protease proteolytic subunit.